A 417-amino-acid chain; its full sequence is D-amino acid dehydrogenase (417 aa).

3–17 (IVVLGGGVVGVTSAW) is a binding site for FAD.

This sequence belongs to the DadA oxidoreductase family. FAD serves as cofactor.

It catalyses the reaction a D-alpha-amino acid + A + H2O = a 2-oxocarboxylate + AH2 + NH4(+). Its pathway is amino-acid degradation; D-alanine degradation; NH(3) and pyruvate from D-alanine: step 1/1. Functionally, oxidative deamination of D-amino acids. In Aeromonas salmonicida (strain A449), this protein is D-amino acid dehydrogenase.